The chain runs to 305 residues: Dihydroorotate dehydrogenase B (NAD(+)), catalytic subunit (305 aa).

FMN-binding positions include serine 21 and 45-46 (KA). Residues lysine 45 and 69-73 (NAIGL) each bind substrate. Residues asparagine 99 and asparagine 127 each contribute to the FMN site. Asparagine 127 contributes to the substrate binding site. Residue cysteine 130 is the Nucleophile of the active site. Residues lysine 165 and isoleucine 191 each coordinate FMN. 192–193 (NT) contributes to the substrate binding site. Residues glycine 217, 243 to 244 (GG), and 265 to 266 (GT) contribute to the FMN site.

It belongs to the dihydroorotate dehydrogenase family. Type 1 subfamily. Heterotetramer of 2 PyrK and 2 PyrD type B subunits. The cofactor is FMN.

It is found in the cytoplasm. The catalysed reaction is (S)-dihydroorotate + NAD(+) = orotate + NADH + H(+). It functions in the pathway pyrimidine metabolism; UMP biosynthesis via de novo pathway; orotate from (S)-dihydroorotate (NAD(+) route): step 1/1. Functionally, catalyzes the conversion of dihydroorotate to orotate with NAD(+) as electron acceptor. The protein is Dihydroorotate dehydrogenase B (NAD(+)), catalytic subunit (pyrD) of Halalkalibacterium halodurans (strain ATCC BAA-125 / DSM 18197 / FERM 7344 / JCM 9153 / C-125) (Bacillus halodurans).